An 806-amino-acid polypeptide reads, in one-letter code: Protein translocase subunit SecA 2 (806 aa).

ATP is bound by residues glutamine 122, 140–144 (GEGKT), and aspartate 533.

The protein belongs to the SecA family. As to quaternary structure, monomer and homodimer. Part of the essential Sec protein translocation apparatus which comprises SecA, SecYEG and auxiliary proteins SecDF. Other proteins may also be involved.

The protein localises to the cell membrane. Its subcellular location is the cytoplasm. It catalyses the reaction ATP + H2O + cellular proteinSide 1 = ADP + phosphate + cellular proteinSide 2.. In terms of biological role, part of the Sec protein translocase complex. Interacts with the SecYEG preprotein conducting channel. Has a central role in coupling the hydrolysis of ATP to the transfer of proteins into and across the cell membrane, serving as an ATP-driven molecular motor driving the stepwise translocation of polypeptide chains across the membrane. The chain is Protein translocase subunit SecA 2 from Mycobacterium ulcerans (strain Agy99).